The following is a 514-amino-acid chain: tRNA-2-methylthio-N(6)-dimethylallyladenosine synthase (514 aa).

A disordered region spans residues 1–21; the sequence is MNEEQRKASSVDVLAERDKKA. Positions 68-186 constitute an MTTase N-terminal domain; it reads RTFLIKTYGC…LPEILEEAYL (119 aa). Residues cysteine 77, cysteine 113, cysteine 147, cysteine 223, cysteine 227, and cysteine 230 each coordinate [4Fe-4S] cluster. The 232-residue stretch at 209-440 folds into the Radical SAM core domain; the sequence is REGNIKAWVN…KKVGHYSQIA (232 aa). Residues 442–505 form the TRAM domain; that stretch reads SKYEGQTVTV…QYSLNGSFVK (64 aa).

It belongs to the methylthiotransferase family. MiaB subfamily. In terms of assembly, monomer. Requires [4Fe-4S] cluster as cofactor.

It localises to the cytoplasm. The catalysed reaction is N(6)-dimethylallyladenosine(37) in tRNA + (sulfur carrier)-SH + AH2 + 2 S-adenosyl-L-methionine = 2-methylsulfanyl-N(6)-dimethylallyladenosine(37) in tRNA + (sulfur carrier)-H + 5'-deoxyadenosine + L-methionine + A + S-adenosyl-L-homocysteine + 2 H(+). In terms of biological role, catalyzes the methylthiolation of N6-(dimethylallyl)adenosine (i(6)A), leading to the formation of 2-methylthio-N6-(dimethylallyl)adenosine (ms(2)i(6)A) at position 37 in tRNAs that read codons beginning with uridine. The chain is tRNA-2-methylthio-N(6)-dimethylallyladenosine synthase from Staphylococcus aureus (strain MRSA252).